A 389-amino-acid polypeptide reads, in one-letter code: cAMP-dependent protein kinase regulatory subunit (389 aa).

Disordered stretches follow at residues Met-1 to Gly-57 and Ser-87 to His-110. Residues Met-1 to Phe-128 are dimerization and phosphorylation. Residues Ala-21–His-31 show a composition bias toward polar residues. Residues Arg-34–Val-43 are compositionally biased toward basic and acidic residues. A Phosphoserine modification is found at Ser-87. The span at Ser-87–Trp-105 shows a compositional bias: polar residues. Residues Leu-129–Glu-258, Glu-207, Arg-216, Leu-261–Glu-377, Glu-327, and Arg-336 each bind 3',5'-cyclic AMP.

This sequence belongs to the cAMP-dependent kinase regulatory chain family. Tetramer, composed of 2 regulatory (R) and 2 catalytic (C) subunits. In the presence of cAMP it dissociates into 2 active monomeric C subunits and an R dimer.

The sequence is that of cAMP-dependent protein kinase regulatory subunit (pkar) from Blumeria graminis (Powdery mildew).